Here is a 94-residue protein sequence, read N- to C-terminus: DNA-directed RNA polymerase subunit omega (94 aa).

Belongs to the RNA polymerase subunit omega family. The RNAP catalytic core consists of 2 alpha, 1 beta, 1 beta' and 1 omega subunit. When a sigma factor is associated with the core the holoenzyme is formed, which can initiate transcription.

It catalyses the reaction RNA(n) + a ribonucleoside 5'-triphosphate = RNA(n+1) + diphosphate. Functionally, promotes RNA polymerase assembly. Latches the N- and C-terminal regions of the beta' subunit thereby facilitating its interaction with the beta and alpha subunits. In Photobacterium profundum (strain SS9), this protein is DNA-directed RNA polymerase subunit omega.